A 267-amino-acid polypeptide reads, in one-letter code: Cilia- and flagella-associated protein 300 (267 aa).

It belongs to the CFAP300 family. As to quaternary structure, interacts with DNAAF2. Expressed in nasal epithelial cells.

The protein resides in the cytoplasm. Its subcellular location is the cytoskeleton. It localises to the cilium axoneme. Cilium- and flagellum-specific protein that plays a role in axonemal structure organization and motility. May play a role in outer and inner dynein arm assembly. This chain is Cilia- and flagella-associated protein 300, found in Homo sapiens (Human).